Here is an 817-residue protein sequence, read N- to C-terminus: Anaphase-promoting complex subunit 4 (817 aa).

Position 469 is a phosphotyrosine (Tyr469). Residues Ser757 and Ser758 each carry the phosphoserine modification. Lys772 participates in a covalent cross-link: Glycyl lysine isopeptide (Lys-Gly) (interchain with G-Cter in SUMO2). Ser777 and Ser779 each carry phosphoserine. A Glycyl lysine isopeptide (Lys-Gly) (interchain with G-Cter in SUMO2) cross-link involves residue Lys798.

Belongs to the APC4 family. The mammalian APC/C is composed at least of 14 distinct subunits ANAPC1, ANAPC2, CDC27/APC3, ANAPC4, ANAPC5, CDC16/APC6, ANAPC7, CDC23/APC8, ANAPC10, ANAPC11, CDC26/APC12, ANAPC13, ANAPC15 and ANAPC16 that assemble into a complex of at least 19 chains with a combined molecular mass of around 1.2 MDa; APC/C interacts with FZR1 and FBXO5. In the context of the APC/C complex, directly interacts with UBE2S.

It is found in the nucleus. It participates in protein modification; protein ubiquitination. In terms of biological role, component of the anaphase promoting complex/cyclosome (APC/C), a cell cycle-regulated E3 ubiquitin ligase that controls progression through mitosis and the G1 phase of the cell cycle. The APC/C complex acts by mediating ubiquitination and subsequent degradation of target proteins: it mainly mediates the formation of 'Lys-11'-linked polyubiquitin chains and, to a lower extent, the formation of 'Lys-48'- and 'Lys-63'-linked polyubiquitin chains. The APC/C complex catalyzes assembly of branched 'Lys-11'-/'Lys-48'-linked branched ubiquitin chains on target proteins. This chain is Anaphase-promoting complex subunit 4 (ANAPC4), found in Pongo abelii (Sumatran orangutan).